Reading from the N-terminus, the 550-residue chain is Protein UshA (550 aa).

The first 25 residues, methionine 1–alanine 25, serve as a signal peptide directing secretion. Aspartate 41, histidine 43, aspartate 84, asparagine 116, histidine 217, histidine 252, and glutamine 254 together coordinate Zn(2+). An intrachain disulfide couples cysteine 258 to cysteine 275. Residues phenylalanine 429 and phenylalanine 498–aspartate 504 contribute to the substrate site.

Belongs to the 5'-nucleotidase family. In terms of assembly, monomer. It depends on Zn(2+) as a cofactor.

It localises to the periplasm. It carries out the reaction UDP-sugar + H2O = UMP + alpha-D-aldose 1-phosphate.. It catalyses the reaction a ribonucleoside 5'-phosphate + H2O = a ribonucleoside + phosphate. Degradation of external UDP-glucose to uridine monophosphate and glucose-1-phosphate, which can then be used by the cell. The chain is Protein UshA (ushA) from Salmonella pullorum.